The primary structure comprises 259 residues: Protein-L-isoaspartate O-methyltransferase (259 aa).

A disordered region spans residues 1–25 (MRKRVDPPAGGRLAPGITPANSNTR). Serine 107 is a catalytic residue.

The protein belongs to the methyltransferase superfamily. L-isoaspartyl/D-aspartyl protein methyltransferase family.

Its subcellular location is the cytoplasm. It carries out the reaction [protein]-L-isoaspartate + S-adenosyl-L-methionine = [protein]-L-isoaspartate alpha-methyl ester + S-adenosyl-L-homocysteine. Catalyzes the methyl esterification of L-isoaspartyl residues in peptides and proteins that result from spontaneous decomposition of normal L-aspartyl and L-asparaginyl residues. It plays a role in the repair and/or degradation of damaged proteins. The sequence is that of Protein-L-isoaspartate O-methyltransferase from Bordetella bronchiseptica (strain ATCC BAA-588 / NCTC 13252 / RB50) (Alcaligenes bronchisepticus).